The following is a 610-amino-acid chain: Elongation factor 4 (610 aa).

The tr-type G domain occupies 7–189; it reads SRIRNFSIIA…AIVQRIPPPK (183 aa). GTP-binding positions include 19 to 24 and 136 to 139; these read DHGKST and NKID.

This sequence belongs to the TRAFAC class translation factor GTPase superfamily. Classic translation factor GTPase family. LepA subfamily.

It localises to the cell inner membrane. It catalyses the reaction GTP + H2O = GDP + phosphate + H(+). Functionally, required for accurate and efficient protein synthesis under certain stress conditions. May act as a fidelity factor of the translation reaction, by catalyzing a one-codon backward translocation of tRNAs on improperly translocated ribosomes. Back-translocation proceeds from a post-translocation (POST) complex to a pre-translocation (PRE) complex, thus giving elongation factor G a second chance to translocate the tRNAs correctly. Binds to ribosomes in a GTP-dependent manner. This Thermus thermophilus (strain ATCC 27634 / DSM 579 / HB8) protein is Elongation factor 4.